A 257-amino-acid polypeptide reads, in one-letter code: Adenosylcobinamide-GDP ribazoletransferase (257 aa).

6 helical membrane passes run 4 to 24, 40 to 60, 64 to 84, 116 to 136, 140 to 160, and 193 to 213; these read AVRGLLLALAFLTRLPVWWLG, VVGLILGILLLALYALLQWFF, FVVQAALLVAAWALVTGLLHL, AAVAVITLALVVKVAALAALL, AALAALLIAPVLGRAAAALLI, and LFVTALAGWAGLAAVLGVVAV.

The protein belongs to the CobS family. It depends on Mg(2+) as a cofactor.

The protein resides in the cell inner membrane. The catalysed reaction is alpha-ribazole + adenosylcob(III)inamide-GDP = adenosylcob(III)alamin + GMP + H(+). It carries out the reaction alpha-ribazole 5'-phosphate + adenosylcob(III)inamide-GDP = adenosylcob(III)alamin 5'-phosphate + GMP + H(+). Its pathway is cofactor biosynthesis; adenosylcobalamin biosynthesis; adenosylcobalamin from cob(II)yrinate a,c-diamide: step 7/7. Its function is as follows. Joins adenosylcobinamide-GDP and alpha-ribazole to generate adenosylcobalamin (Ado-cobalamin). Also synthesizes adenosylcobalamin 5'-phosphate from adenosylcobinamide-GDP and alpha-ribazole 5'-phosphate. The chain is Adenosylcobinamide-GDP ribazoletransferase from Alkalilimnicola ehrlichii (strain ATCC BAA-1101 / DSM 17681 / MLHE-1).